Reading from the N-terminus, the 92-residue chain is Small ribosomal subunit protein uS19c (92 aa).

Belongs to the universal ribosomal protein uS19 family.

It is found in the plastid. Its subcellular location is the chloroplast. Protein S19 forms a complex with S13 that binds strongly to the 16S ribosomal RNA. In Huperzia lucidula (Shining clubmoss), this protein is Small ribosomal subunit protein uS19c.